The sequence spans 479 residues: Adenylate kinase 8 (479 aa).

Adenylate kinase regions lie at residues 58–258 and 269–471; these read PRVV…TYVQ and PKVL…SGII. 67–72 contributes to the ATP binding site; the sequence is ASGKTT. The NMP 1 stretch occupies residues 87 to 113; that stretch reads TKENLLEREFSLLSLEAKKHYQVYKRV. Residues 140-143, Gln147, and Arg203 each bind AMP; that span reads GIPE. Residues 177 to 206 are LID 1; the sequence is GKRIDPVTGEIYHTTFDWPPELEIQNRLIQ. Position 278-283 (278-283) interacts with ATP; it reads GCGKKL. The segment at 298–327 is NMP 2; the sequence is SCGQLLKEAMAAESSLGDLIEPFFEKRMTV. AMP-binding positions include 325 to 327, 354 to 357, and Gln361; these read MTV and GFPR. An LID 2 region spans residues 391–424; the sequence is LRRTDPVTGERFHLMYKPPPTIEVQARLLQNPKD. An ATP-binding site is contributed by Arg392.

This sequence belongs to the adenylate kinase family. As to quaternary structure, interacts with CFAP45 and CFAP52; CFAP45 and AK8 dimerization may create a cavity at the interface of the dimer that can accommodate AMP.

It is found in the cytoplasm. It localises to the cytosol. The protein localises to the cytoskeleton. The protein resides in the cilium axoneme. It carries out the reaction AMP + ATP = 2 ADP. The enzyme catalyses a 2'-deoxyribonucleoside 5'-diphosphate + ATP = a 2'-deoxyribonucleoside 5'-triphosphate + ADP. It catalyses the reaction a ribonucleoside 5'-diphosphate + ATP = a ribonucleoside 5'-triphosphate + ADP. In terms of biological role, nucleoside monophosphate (NMP) kinase that catalyzes the reversible transfer of the terminal phosphate group between nucleoside triphosphates and monophosphates. Has highest activity toward AMP, and weaker activity toward dAMP, CMP and dCMP. Also displays broad nucleoside diphosphate kinase activity. This is Adenylate kinase 8 (Ak8) from Rattus norvegicus (Rat).